A 399-amino-acid chain; its full sequence is MISAIVDERNRMNIRQEISGLGCFKDDRIVFWTWMYSTYFMEKWAPRQDDMLFYVRRKPAYMGPDGNEGRKQVEVEVYRKDSKKLPGLGDPDIDWEESVYLNLILQKLDYMVTCAVCTRSDAGDIHIHKKKSQQVFASPSKHPMDSKGEESKISYPNIFFMIDNFEEVFSDMTVGEGEMVCVELVARDKTNTFQGVIFQGSIRYEALKKVYDNRVSVAAKMAQKMSFGFYKYNNMEFVRMKGPQGKGHAEMAVSRVSTGDTSPYGTEEDSNPGSPMHERVTSFSTPPTPERNNRPSFFSPSLKRKVPRNRNAEMKKSHSANDSEEFFRDSDDDGDLHNVTNLRSRSLSGTGRSLVGSWLKLNRTEENALLYAHLTYVTLPLLRILSDILDVRQKPILMS.

A disordered region spans residues 254–335 (SRVSTGDTSP…FFRDSDDDGD (82 aa)). A compositionally biased stretch (polar residues) spans 255–264 (RVSTGDTSPY). Basic and acidic residues predominate over residues 310–329 (RNAEMKKSHSANDSEEFFRD).

This is an uncharacterized protein from Xenopus laevis (African clawed frog).